Reading from the N-terminus, the 81-residue chain is Serine rich endogenous peptide 21 (81 aa).

The first 40 residues, 1–40 (MLELHFEFIDLNQPKMYKFVVCLLTLSFLLLSGLSNTALA), serve as a signal peptide directing secretion. Residues 65 to 79 (KVRVLPSASRRGPGQ) carry the SCOOP motif motif. Residues 71–73 (SAS) carry the SxS motif essential for MIK2 binding motif.

Belongs to the serine rich endogenous peptide (SCOOP) phytocytokine family. In terms of assembly, interacts with MIK2 (via extracellular leucine-rich repeat domain); this interaction triggers the formation of complex between MIK2 and the BAK1/SERK3 and SERK4 coreceptors, and subsequent BAK1 activation by phosphorylation.

Its subcellular location is the cell membrane. The protein localises to the secreted. It localises to the extracellular space. It is found in the apoplast. Brassicaceae-specific phytocytokine (plant endogenous peptide released into the apoplast) perceived by MIK2 in a BAK1/SERK3 and SERK4 coreceptors-dependent manner, that modulates various physiological and antimicrobial processes including growth prevention and reactive oxygen species (ROS) response regulation. This Arabidopsis thaliana (Mouse-ear cress) protein is Serine rich endogenous peptide 21.